Reading from the N-terminus, the 237-residue chain is uncharacterized protein (237 aa).

The Response regulatory domain occupies 3 to 116; sequence RILLVEDDER…VVMAKIKSVL (114 aa). Residue Asp-52 is modified to 4-aspartylphosphate. A DNA-binding region (ompR/PhoB-type) is located at residues 131 to 229; that stretch reads SRIVELGGLT…IRGQGYQFQV (99 aa).

In terms of processing, phosphorylated by YvcQ.

Its subcellular location is the cytoplasm. In terms of biological role, member of the two-component regulatory system YvcQ/YvcP. This is an uncharacterized protein from Bacillus subtilis (strain 168).